A 256-amino-acid chain; its full sequence is Enolase-phosphatase E1 (256 aa).

2 residues coordinate Mg(2+): D14 and E16. Residues S142–S143 and K176 each bind substrate. D201 serves as a coordination point for Mg(2+).

Belongs to the HAD-like hydrolase superfamily. MasA/MtnC family. Monomer. The cofactor is Mg(2+).

The protein localises to the cytoplasm. The protein resides in the nucleus. It catalyses the reaction 5-methylsulfanyl-2,3-dioxopentyl phosphate + H2O = 1,2-dihydroxy-5-(methylsulfanyl)pent-1-en-3-one + phosphate. It participates in amino-acid biosynthesis; L-methionine biosynthesis via salvage pathway; L-methionine from S-methyl-5-thio-alpha-D-ribose 1-phosphate: step 3/6. Its pathway is amino-acid biosynthesis; L-methionine biosynthesis via salvage pathway; L-methionine from S-methyl-5-thio-alpha-D-ribose 1-phosphate: step 4/6. Its function is as follows. Bifunctional enzyme that catalyzes the enolization of 2,3-diketo-5-methylthiopentyl-1-phosphate (DK-MTP-1-P) into the intermediate 2-hydroxy-3-keto-5-methylthiopentenyl-1-phosphate (HK-MTPenyl-1-P), which is then dephosphorylated to form the acireductone 1,2-dihydroxy-3-keto-5-methylthiopentene (DHK-MTPene). This Drosophila erecta (Fruit fly) protein is Enolase-phosphatase E1.